Reading from the N-terminus, the 1734-residue chain is MGQTVTTPLSLTLEHWGDVQRIASNQSVGVKKRRWVTFCSAEWPTFGVGWPQDGTFNLDIILQVKSKVFSPGPHGHPDQVPYIVTWEAIAYEPPPWVKPFVSPKLSLSPTAPILPSGPSTQPPPRSALYPAFTPSIKPRPSKPQVLSDDGGPLIDLLTEDPPPYGEQGPSSPDGDGDREEATSTSEIPAPSPMVSRLRGKRDPPAADSTTSRAFPLRLGGNGQLQYWPFSSSDLYNWKNNNPSFSEDPGKLTALIESVLTTHQPTWDDCQQLLGTLLTGEEKQRVLLEARKAVRGNDGRPTQLPNEVNSAFPLERPDWDYTTPEGRNHLVLYRQLLLAGLQNAGRSPTNLAKVKGITQGPNESPSAFLERLKEAYRRYTPYDPEDPGQETNVSMSFIWQSAPAIGRKLERLEDLKSKTLGDLVREAEKIFNKRETPEEREERIRRETEEKEERRRAGDEQREKERDRRRQREMSKLLATVVTGQRQDRQGGERRRPQLDKDQCAYCKEKGHWAKDCPKKPRGPRGPRPQTSLLTLDDQGGQGQEPPPEPRITLTVGGQPVTFLVDTGAQHSVLTQNPGPLSDRSAWVQGATGGKRYRWTTDRKVHLATGKVTHSFLHVPDCPYPLLGRDLLTKLKAQIHFEGSGAQVVGPKGQPLQVLTLGIEDEYRLHETSTEPDVSLGSTWLSDFPQAWAETGGMGLAVRQAPLIIPLKATSTPVSIQQYPMSHEARLGIKPHIQRLLDQGILVPCQSPWNTPLLPVKKPGTNDYRPVQDLREVNKRVEDIHPTVPNPYNLLSGLPPSHQWYTVLDLKDAFFCLRLHPTSQPLFAFEWRDPGMGISGQLTWTRLPQGFKNSPTLFDEALHRDLADFRIQHPDLILLQYVDDILLAATSELDCQQGTRALLQTLGDLGYRASAKKAQICQKQVKYLGYLLREGQRWLTEARKETVMGQPVPKTPRQLREFLGTAGFCRLWIPGFAEMAAPLYPLTKTGTLFSWGPDQQKAYQEIKQALLTAPALGLPDLTKPFELFVDEKQGYAKGVLTQKLGPWRRPVAYLSKKLDPVAAGWPPCLRMVAAIAVLTKDAGKLTMGQPLVILAPHAVEALVKQPPDRWLSNARMTHYQAMLLDTDRVQFGPVVALNPATLLPLPEEGAPHDCLEILAETHGTRPDLTDQPIPDADHTWYTDGSSFLQEGQRKAGAAVTTETEVIWAGALPAGTSAQRAELIALTQALKMAEGKRLNVYTDSRYAFATAHIHGEIYRRRGLLTSEGREIKNKSEILALLKALFLPKRLSIIHCLGHQKGDSAEARGNRLADQAAREAAIKTPPDTSTLLIEDSTPYTPAYFHYTETDLKKLRDLGATYNQSKGYWVFQGKPVMPDQFVFELLDSLHRLTHLGYQKMKALLDRGESPYYMLNRDKTLQYVADSCTVCAQVNASKAKIGAGVRVRGHRPGTHWEIDFTEVKPGLYGYKYLLVFVDTFSGWVEAFPTKRETARVVSKKLLEEIFPRFGMPQVLGSDNGPAFTSQVSQSVADLLGIDWKLHCAYRPQSSGQVERINRTIKETLTKLTLAAGTRDWVLLLPLALYRARNTPGPHGLTPYEILYGAPPPLVNFHDPDMSELTNSPSLQAHLQALQTVQREIWKPLAEAYRDRLDQPVIPHPFRIGDSVWVRRHQTKNLEPRWKGPYTVLLTTPTALKVDGISAWIHAAHVKAATTPPIKPSWRVQRSQNPLKIRLTRGAP.

Gly2 carries N-myristoyl glycine; by host lipidation. A PTAP/PSAP motif motif is present at residues 109 to 112; that stretch reads PTAP. Residues 112 to 217 form a disordered region; the sequence is PILPSGPSTQ…STTSRAFPLR (106 aa). Residues 128–132 carry the LYPX(n)L motif motif; that stretch reads LYPAF. The PPXY motif signature appears at 161–164; that stretch reads PPPY. Position 191 is a phosphoserine; by host (Ser191). The tract at residues 344-392 is interaction with host PIAS4; sequence GRSPTNLAKVKGITQGPNESPSAFLERLKEAYRRYTPYDPEDPGQETNV. The interaction with host UBE2I stretch occupies residues 429–434; sequence IFNKRE. Composition is skewed to basic and acidic residues over residues 433-474 and 485-498; these read RETP…REMS and RQDR…RPQL. 2 disordered regions span residues 433 to 498 and 512 to 551; these read RETP…RPQL and WAKD…EPRI. A CCHC-type zinc finger spans residues 501–518; sequence DQCAYCKEKGHWAKDCPK. Positions 560 to 630 constitute a Peptidase A2 domain; that stretch reads VTFLVDTGAQ…CPYPLLGRDL (71 aa). The active-site Protease; shared with dimeric partner is Asp565. Residues 740–931 enclose the Reverse transcriptase domain; it reads LDQGILVPCQ…KQVKYLGYLL (192 aa). Positions 808, 882, 883, 1182, 1220, 1241, and 1311 each coordinate Mg(2+). Residues 1173 to 1319 enclose the RNase H type-1 domain; that stretch reads PDADHTWYTD…ADQAAREAAI (147 aa). The HHCC-type zinc-finger motif lies at 1386–1426; sequence HRLTHLGYQKMKALLDRGESPYYMLNRDKTLQYVADSCTVC. The Integrase catalytic domain occupies 1443–1601; sequence RGHRPGTHWE…TPYEILYGAP (159 aa). Residues Asp1454 and Asp1513 each coordinate Mg(2+).

Homohexamer; further associates as homomultimer. The virus core is composed of a lattice formed from hexagonal rings, each containing six capsid monomers. Interacts with mouse UBE2I and mouse PIAS4. As to quaternary structure, interacts (via PPXY motif) with host NEDD4. Interacts (via PSAP motif) with host TSG101. Interacts (via LYPX(n)L motif) with host PDCD6IP. In terms of assembly, the reverse transcriptase is a monomer (Potential). Interacts (via RNase domains) with host release factor ETF1; this interaction is essential for translational readthrough of amber codon between viral gag and pol genes, as well as for viral replication. Homodimer. Mg(2+) is required as a cofactor. In terms of processing, ubiquitinated by ITCH. Gag can recruit the ubiquitin ligase Itch in an L domain-independent manner to facilitate virus release via a mechanism that involves Gag ubiquitination. Post-translationally, specific enzymatic cleavages by the viral protease yield mature proteins. The protease is released by autocatalytic cleavage. The polyprotein is cleaved during and after budding, this process is termed maturation. Sumoylated; which is required for virus replication. In terms of processing, phosphorylated on serine residues.

The protein resides in the virion. Its subcellular location is the host cell membrane. It localises to the host late endosome membrane. The protein localises to the host endosome. It is found in the host multivesicular body. The protein resides in the host cytoplasm. It catalyses the reaction DNA(n) + a 2'-deoxyribonucleoside 5'-triphosphate = DNA(n+1) + diphosphate. It carries out the reaction Endonucleolytic cleavage to 5'-phosphomonoester.. With respect to regulation, most efficiently inhibited by Amprenavir, which is able to block Gag-Pol processing in infected cells. Functionally, plays a role in budding and is processed by the viral protease during virion maturation outside the cell. During budding, it recruits, in a PPXY-dependent or independent manner, Nedd4-like ubiquitin ligases that conjugate ubiquitin molecules to Gag-Pol, or to Gag-Pol binding host factors. Interaction with HECT ubiquitin ligases probably links the viral protein to the host ESCRT pathway and facilitates release. Targets Gag and gag-pol polyproteins to the plasma membrane via a multipartite membrane binding signal, that includes its myristoylated N-terminus. Also mediates nuclear localization of the pre-integration complex. In terms of biological role, constituent of the pre-integration complex (PIC) which tethers the latter to mitotic chromosomes. This allows the integration of the viral genome into the host DNA. Its function is as follows. Forms the spherical core of the virion that encapsulates the genomic RNA-nucleocapsid complex. Functionally, involved in the packaging and encapsidation of two copies of the genome. Binds with high affinity to conserved UCUG elements within the packaging signal, located near the 5'-end of the genome. This binding is dependent on genome dimerization. Acts as a nucleic acid chaperone which is involved in rearrangement of nucleic acid secondary structures during gRNA retrotranscription. The aspartyl protease mediates proteolytic cleavages of Gag and Gag-Pol polyproteins during or shortly after the release of the virion from the plasma membrane. Cleavages take place as an ordered, step-wise cascade to yield mature proteins. This process is called maturation. Displays maximal activity during the budding process just prior to particle release from the cell (Potential). Cleaves the translation initiation factor eIF4G leading to the inhibition of host cap-dependent translation. In terms of biological role, RT is a multifunctional enzyme that converts the viral dimeric RNA genome into dsDNA in the cytoplasm, shortly after virus entry into the cell. This enzyme displays a DNA polymerase activity that can copy either DNA or RNA templates, and a ribonuclease H (RNase H) activity that cleaves the RNA strand of RNA-DNA heteroduplexes in a partially processive 3' to 5' endonucleasic mode. Conversion of viral genomic RNA into dsDNA requires many steps. A tRNA binds to the primer-binding site (PBS) situated at the 5' end of the viral RNA. RT uses the 3' end of the tRNA primer to perform a short round of RNA-dependent minus-strand DNA synthesis. The reading proceeds through the U5 region and ends after the repeated (R) region which is present at both ends of viral RNA. The portion of the RNA-DNA heteroduplex is digested by the RNase H, resulting in a ssDNA product attached to the tRNA primer. This ssDNA/tRNA hybridizes with the identical R region situated at the 3' end of viral RNA. This template exchange, known as minus-strand DNA strong stop transfer, can be either intra- or intermolecular. RT uses the 3' end of this newly synthesized short ssDNA to perform the RNA-dependent minus-strand DNA synthesis of the whole template. RNase H digests the RNA template except for a polypurine tract (PPT) situated at the 5' end of the genome. It is not clear if both polymerase and RNase H activities are simultaneous. RNase H probably can proceed both in a polymerase-dependent (RNA cut into small fragments by the same RT performing DNA synthesis) and a polymerase-independent mode (cleavage of remaining RNA fragments by free RTs). Secondly, RT performs DNA-directed plus-strand DNA synthesis using the PPT that has not been removed by RNase H as primers. PPT and tRNA primers are then removed by RNase H. The 3' and 5' ssDNA PBS regions hybridize to form a circular dsDNA intermediate. Strand displacement synthesis by RT to the PBS and PPT ends produces a blunt ended, linear dsDNA copy of the viral genome that includes long terminal repeats (LTRs) at both ends. Its function is as follows. Catalyzes viral DNA integration into the host chromosome, by performing a series of DNA cutting and joining reactions. This enzyme activity takes place after virion entry into a cell and reverse transcription of the RNA genome in dsDNA. The first step in the integration process is 3' processing. This step requires a complex comprising the viral genome, matrix protein and integrase. This complex is called the pre-integration complex (PIC). The integrase protein removes 2 nucleotides from each 3' end of the viral DNA, leaving recessed CA OH's at the 3' ends. In the second step that requires cell division, the PIC enters cell nucleus. In the third step, termed strand transfer, the integrase protein joins the previously processed 3' ends to the 5' ends of strands of target cellular DNA at the site of integration. The last step is viral DNA integration into host chromosome. This chain is Gag-pol polyprotein (gag-pol), found in Mus musculus (Mouse).